The primary structure comprises 828 residues: Putative alpha-1,3-mannosyltransferase MNN12 (828 aa).

Over 1-13 the chain is Cytoplasmic; the sequence is MIEKLTIKRSRQK. Residues 14-34 traverse the membrane as a helical segment; the sequence is VIAYSVIIIWLMIVNIWLLNN. The Lumenal segment spans residues 35 to 828; it reads YHLNSSTLTR…YYGDVWVGME (794 aa). A glycan (N-linked (GlcNAc...) asparagine) is linked at N38. The segment at 80-104 is disordered; that stretch reads HQEEDVPNSQSTDNSLIKPTSPAKN. Over residues 86–103 the composition is skewed to polar residues; sequence PNSQSTDNSLIKPTSPAK. N247, N437, and N591 each carry an N-linked (GlcNAc...) asparagine glycan.

The protein belongs to the MNN1/MNT family.

The protein localises to the golgi apparatus membrane. It functions in the pathway protein modification; protein glycosylation. Its function is as follows. Responsible for addition of the terminal mannose residues to the outer chain of core N-linked polysaccharides and to O-linked mannotriose. Implicated in late Golgi modifications. In Candida albicans (strain SC5314 / ATCC MYA-2876) (Yeast), this protein is Putative alpha-1,3-mannosyltransferase MNN12 (MNN12).